We begin with the raw amino-acid sequence, 131 residues long: Small ribosomal subunit protein uS8 (131 aa).

The protein belongs to the universal ribosomal protein uS8 family. As to quaternary structure, part of the 30S ribosomal subunit. Contacts proteins S5 and S12.

Its function is as follows. One of the primary rRNA binding proteins, it binds directly to 16S rRNA central domain where it helps coordinate assembly of the platform of the 30S subunit. The protein is Small ribosomal subunit protein uS8 of Chromobacterium violaceum (strain ATCC 12472 / DSM 30191 / JCM 1249 / CCUG 213 / NBRC 12614 / NCIMB 9131 / NCTC 9757 / MK).